A 398-amino-acid chain; its full sequence is Succinate--CoA ligase [ADP-forming] subunit beta (398 aa).

The ATP-grasp domain occupies lysine 9 to glutamine 250. ATP-binding positions include lysine 50, glycine 57–glycine 59, glutamate 104, leucine 107, and glutamate 112. Residues asparagine 205 and aspartate 219 each coordinate Mg(2+). Substrate contacts are provided by residues asparagine 270 and glycine 327–methionine 329.

The protein belongs to the succinate/malate CoA ligase beta subunit family. As to quaternary structure, heterotetramer of two alpha and two beta subunits. The cofactor is Mg(2+).

The enzyme catalyses succinate + ATP + CoA = succinyl-CoA + ADP + phosphate. It carries out the reaction GTP + succinate + CoA = succinyl-CoA + GDP + phosphate. It participates in carbohydrate metabolism; tricarboxylic acid cycle; succinate from succinyl-CoA (ligase route): step 1/1. Succinyl-CoA synthetase functions in the citric acid cycle (TCA), coupling the hydrolysis of succinyl-CoA to the synthesis of either ATP or GTP and thus represents the only step of substrate-level phosphorylation in the TCA. The beta subunit provides nucleotide specificity of the enzyme and binds the substrate succinate, while the binding sites for coenzyme A and phosphate are found in the alpha subunit. In Sorangium cellulosum (strain So ce56) (Polyangium cellulosum (strain So ce56)), this protein is Succinate--CoA ligase [ADP-forming] subunit beta.